The following is a 346-amino-acid chain: Autophagy-related protein 3 (346 aa).

A flexible region region spans residues 85 to 161 (DFAGDAGHEE…DDDDEAIIRA (77 aa)). The active-site Glycyl thioester intermediate is Cys-238. The tract at residues 242–322 (SVMKTLLDRA…DQEVAIRVDQ (81 aa)) is handle region.

It belongs to the ATG3 family. Monomer. Interacts with apg-6/atg8 through an intermediate thioester bond through the C-terminal Gly of apg-6/atg8. Also interacts with the 40 amino acid C-terminal region of the E1-like apg-5/atg7 enzyme. Also interacts with the atg12-apg-4/atg5 conjugate.

The protein resides in the cytoplasm. Its function is as follows. E2 conjugating enzyme required for the cytoplasm to vacuole transport (Cvt) and autophagy. Required for selective autophagic degradation of the nucleus (nucleophagy) as well as for mitophagy which contributes to regulate mitochondrial quantity and quality by eliminating the mitochondria to a basal level to fulfill cellular energy requirements and preventing excess ROS production. Responsible for the E2-like covalent binding of phosphatidylethanolamine to the C-terminal Gly of apg-6/atg8. The atg12-apg-4/atg5 conjugate plays a role of an E3 and promotes the transfer of apg-6/atg8 from apg-3/atg3 to phosphatidylethanolamine (PE). This step is required for the membrane association of apg-6/atg8. The formation of the apg-6/atg8-phosphatidylethanolamine conjugate is essential for autophagy and for the cytoplasm to vacuole transport (Cvt). The apg-6/atg8-PE conjugate mediates tethering between adjacent membranes and stimulates membrane hemifusion, leading to expansion of the autophagosomal membrane during autophagy. The polypeptide is Autophagy-related protein 3 (apg-3) (Neurospora crassa (strain ATCC 24698 / 74-OR23-1A / CBS 708.71 / DSM 1257 / FGSC 987)).